Reading from the N-terminus, the 379-residue chain is Succinyl-diaminopimelate desuccinylase (379 aa).

Residue His70 participates in Zn(2+) binding. Residue Asp72 is part of the active site. Position 103 (Asp103) interacts with Zn(2+). The active-site Proton acceptor is the Glu137. The Zn(2+) site is built by Glu138, Glu166, and His352.

The protein belongs to the peptidase M20A family. DapE subfamily. In terms of assembly, homodimer. It depends on Zn(2+) as a cofactor. Co(2+) is required as a cofactor.

The catalysed reaction is N-succinyl-(2S,6S)-2,6-diaminopimelate + H2O = (2S,6S)-2,6-diaminopimelate + succinate. It participates in amino-acid biosynthesis; L-lysine biosynthesis via DAP pathway; LL-2,6-diaminopimelate from (S)-tetrahydrodipicolinate (succinylase route): step 3/3. In terms of biological role, catalyzes the hydrolysis of N-succinyl-L,L-diaminopimelic acid (SDAP), forming succinate and LL-2,6-diaminopimelate (DAP), an intermediate involved in the bacterial biosynthesis of lysine and meso-diaminopimelic acid, an essential component of bacterial cell walls. The polypeptide is Succinyl-diaminopimelate desuccinylase (Shewanella sp. (strain W3-18-1)).